The primary structure comprises 488 residues: UDP-glycosyltransferase 92A1 (488 aa).

Residues Ser-292, 358–360 (APQ), 375–383 (HCGWNSILE), and 397–400 (AAEQ) each bind UDP-alpha-D-glucose.

It belongs to the UDP-glycosyltransferase family.

This Arabidopsis thaliana (Mouse-ear cress) protein is UDP-glycosyltransferase 92A1 (UGT92A1).